The chain runs to 91 residues: Cell division protein ZapA (91 aa).

Positions 59 to 86 (TAVNIANEYLKLKEEYDRLAAKLRREKG) form a coiled coil.

It belongs to the ZapA family. Type 2 subfamily. As to quaternary structure, homodimer. Interacts with FtsZ.

The protein localises to the cytoplasm. In terms of biological role, activator of cell division through the inhibition of FtsZ GTPase activity, therefore promoting FtsZ assembly into bundles of protofilaments necessary for the formation of the division Z ring. It is recruited early at mid-cell but it is not essential for cell division. In Geobacillus thermodenitrificans (strain NG80-2), this protein is Cell division protein ZapA.